The sequence spans 95 residues: Large ribosomal subunit protein bL25 (95 aa).

Positions 1-20 (MSFKFNAEVRSKQGKGASRR) are disordered.

Belongs to the bacterial ribosomal protein bL25 family. Part of the 50S ribosomal subunit; part of the 5S rRNA/L5/L18/L25 subcomplex. Contacts the 5S rRNA. Binds to the 5S rRNA independently of L5 and L18.

Its function is as follows. This is one of the proteins that binds to the 5S RNA in the ribosome where it forms part of the central protuberance. This is Large ribosomal subunit protein bL25 from Histophilus somni (strain 129Pt) (Haemophilus somnus).